The following is a 463-amino-acid chain: T-box transcription factor TBX1 (463 aa).

2 disordered regions span residues 39–58 and 75–103; these read SPSPGDPYSQHEPHYEPCSA and GASSSSCASSTPGSGSTGSSGSSKAPVKK. Positions 75–97 are enriched in low complexity; that stretch reads GASSSSCASSTPGSGSTGSSGSS. A DNA-binding region (T-box) is located at residues 119-297; the sequence is LWDEFNQLGT…SNPFAKGFRD (179 aa). Disordered regions lie at residues 320–354 and 367–405; these read RSRNPVSSPPQNGSDKDGDGRREYERDTSGTPLHG and SPSLPVPGGLVPLSTGRPSPPHELRLDPHSQGSEPLHHH. Residues 323–332 are compositionally biased toward polar residues; sequence NPVSSPPQNG. Basic and acidic residues predominate over residues 333–347; it reads SDKDGDGRREYERDT. Residues 367–380 are compositionally biased toward low complexity; it reads SPSLPVPGGLVPLS. A Nuclear localization signal motif is present at residues 420–431; sequence KTRPAPYPLPSI.

In terms of assembly, binds DNA as a dimer. Interacts with dscr6/ripply3.

Its subcellular location is the nucleus. Probable transcriptional regulator involved in developmental processes. Binds to the palindromic T site 5'-TTCACACCTAGGTGTGAA-3' DNA sequence. Induces pre-placodal ectoderm (PPE) gene expression in regions where RIPPLY3 is absent. Plays a role in the formation of the anteroposterior (AP) axis during embryonic development; required to establish the posterolateral border of the pre-placodal ectoderm (PPE) acting downstream of the retinoic acid receptor (RAR) signaling. The sequence is that of T-box transcription factor TBX1 (tbx1) from Xenopus tropicalis (Western clawed frog).